We begin with the raw amino-acid sequence, 137 residues long: Actin-depolymerizing factor 2 (137 aa).

One can recognise an ADF-H domain in the interval 5 to 137 (ASGMAVHDDC…GLDVFKSRTN (133 aa)). Ser6 carries the post-translational modification Phosphoserine.

This sequence belongs to the actin-binding proteins ADF family. As to quaternary structure, interacts with AIP1-1.

The protein resides in the cytoplasm. It is found in the cytoskeleton. Actin-depolymerizing protein. Severs actin filaments (F-actin) and binds to actin monomers. Required for normal cell growth, plant development, cell organ expansion and flowering. Essential for root-knot nematode infection. The chain is Actin-depolymerizing factor 2 (ADF2) from Arabidopsis thaliana (Mouse-ear cress).